Reading from the N-terminus, the 451-residue chain is Plasmepsin III (451 aa).

The Cytoplasmic segment spans residues 1-37 (MNLTIKEEDFTNTFMKNEESFNTFRVTKVKRWNAKRL). The propeptide occupies 1–123 (MNLTIKEEDF…KGLTKKSYLG (123 aa)). Residues 38-58 (FKILFVTVFIVLAGGFSYYIF) form a helical; Signal-anchor for type II membrane protein membrane-spanning segment. Topologically, residues 59–451 (ENFVFQKNRK…TVGFALAKNL (393 aa)) are lumenal. Positions 139 to 446 (SFGEAKLGDN…DYDNHTVGFA (308 aa)) constitute a Peptidase A1 domain. Cystine bridges form between cysteine 170-cysteine 175 and cysteine 372-cysteine 408.

This sequence belongs to the peptidase A1 family. As to quaternary structure, probable homodimer; in the zymogen form. Monomer; in the active form. Acidification disrupts homodimerization. Component of the hemozoin formation complex (HFC) composed of falcipains FP2A and/or FP2B, plasmepsins PMII, PMIII/HAP and PMIV, heme detoxifying protein HDP and falcilysin FLN. The HFC complex is involved in hemoglobin degradation and detoxification of heme in the food vacuole during the asexual blood stage. In terms of processing, proteolytically cleaved into the soluble active mature form by cysteine proteases in the digestive vacuole of trophozoites. Proteolysis requires an acidic environment. Transprocessing may serve as an alternate activation system.

Its subcellular location is the membrane. The protein resides in the vacuole lumen. The enzyme catalyses Hydrolysis of the bonds linking certain hydrophobic residues in hemoglobin or globin. Also cleaves small molecules substrates such as Ala-Leu-Glu-Arg-Thr-Phe-|-Phe(NO2)-Ser-Phe-Pro-Thr.. With respect to regulation, dimerization causes loss of catalytic activity. Inhibited by pepstatin A. Inhibited by Zn(2+). Its function is as follows. During the asexual blood stage, catalyzes the cleavage of denatured host hemoglobin (Hb) or globins. Digestion of host Hb is an essential step which provides the parasite with amino acids for protein synthesis, and regulates osmolarity. This Plasmodium falciparum (isolate 3D7) protein is Plasmepsin III.